The chain runs to 80 residues: uncharacterized protein (80 aa).

An N-terminal signal peptide occupies residues 1–20 (MVAADHRALGSNKSYPASQT). The interval 1–21 (MVAADHRALGSNKSYPASQTA) is disordered. A compositionally biased stretch (polar residues) spans 11–21 (SNKSYPASQTA).

This is an uncharacterized protein from Mycobacterium tuberculosis (strain CDC 1551 / Oshkosh).